Reading from the N-terminus, the 510-residue chain is Lysine--tRNA ligase (510 aa).

Residues E420 and E427 each contribute to the Mg(2+) site.

It belongs to the class-II aminoacyl-tRNA synthetase family. As to quaternary structure, homodimer. Mg(2+) serves as cofactor.

The protein localises to the cytoplasm. It catalyses the reaction tRNA(Lys) + L-lysine + ATP = L-lysyl-tRNA(Lys) + AMP + diphosphate. The protein is Lysine--tRNA ligase of Clostridium novyi (strain NT).